The sequence spans 197 residues: ATP-dependent Clp protease proteolytic subunit 1 (197 aa).

Catalysis depends on serine 100, which acts as the Nucleophile. Histidine 125 is an active-site residue.

The protein belongs to the peptidase S14 family. In terms of assembly, fourteen ClpP subunits assemble into 2 heptameric rings which stack back to back to give a disk-like structure with a central cavity, resembling the structure of eukaryotic proteasomes.

It localises to the cytoplasm. It carries out the reaction Hydrolysis of proteins to small peptides in the presence of ATP and magnesium. alpha-casein is the usual test substrate. In the absence of ATP, only oligopeptides shorter than five residues are hydrolyzed (such as succinyl-Leu-Tyr-|-NHMec, and Leu-Tyr-Leu-|-Tyr-Trp, in which cleavage of the -Tyr-|-Leu- and -Tyr-|-Trp bonds also occurs).. Functionally, cleaves peptides in various proteins in a process that requires ATP hydrolysis. Has a chymotrypsin-like activity. Plays a major role in the degradation of misfolded proteins. This is ATP-dependent Clp protease proteolytic subunit 1 from Gloeobacter violaceus (strain ATCC 29082 / PCC 7421).